Here is a 146-residue protein sequence, read N- to C-terminus: P antigen family member 1 (146 aa).

A disordered region spans residues 16-146; sequence YVESSEESSD…PEEDEGQSQP (131 aa). Residues 19–32 show a composition bias toward acidic residues; the sequence is SSEESSDEQPDEVE. Position 63 is a phosphoserine (Ser63). Residues 79–92 show a composition bias toward basic and acidic residues; it reads PDTKRVCLRNEEQM. The residue at position 105 (Ser105) is a Phosphoserine. Residues 107 to 120 are compositionally biased toward basic and acidic residues; the sequence is EQVHPKTGCERGDG. The residue at position 144 (Ser144) is a Phosphoserine.

This sequence belongs to the GAGE family. In terms of tissue distribution, isolated from prostate cancer cell lines; expression associated with progression to androgen insensitive phenotype. Expressed in normal testis and at lower level in normal placenta.

The chain is P antigen family member 1 (PAGE1) from Homo sapiens (Human).